A 471-amino-acid polypeptide reads, in one-letter code: Probable lysophospholipase BODYGUARD 2 (471 aa).

A signal peptide spans 1–45; that stretch reads MGIARWLNRTVGFFVFALLDIADFLLCYTYKTLDYFLESERKPCY. Cys-46 carries N-palmitoyl cysteine lipidation. An AB hydrolase-1 domain is found at 193 to 296; it reads VVFIHGFVSS…AIKSLTLLAP (104 aa). His-197 is a catalytic residue. The active-site Nucleophile is the Ser-271. Active-site charge relay system residues include Asp-418 and His-446.

The protein localises to the cell membrane. It localises to the secreted. The protein resides in the cell wall. Involved in cuticle development and morphogenesis. This is Probable lysophospholipase BODYGUARD 2 from Arabidopsis thaliana (Mouse-ear cress).